Here is a 630-residue protein sequence, read N- to C-terminus: Protein mono-ADP-ribosyltransferase PARP6 (630 aa).

C237 carries the post-translational modification ADP-ribosylcysteine. The PARP catalytic domain maps to 394-620; the sequence is EMTQGSYLEI…QDPKIQKEIM (227 aa). ADP-ribosyl aspartic acid is present on D600.

The protein belongs to the ARTD/PARP family. Post-translationally, auto-mono-ADP-ribosylated.

It carries out the reaction L-aspartyl-[protein] + NAD(+) = 4-O-(ADP-D-ribosyl)-L-aspartyl-[protein] + nicotinamide. It catalyses the reaction L-cysteinyl-[protein] + NAD(+) = S-(ADP-D-ribosyl)-L-cysteinyl-[protein] + nicotinamide + H(+). In terms of biological role, mono-ADP-ribosyltransferase that mediates mono-ADP-ribosylation of target proteins. This chain is Protein mono-ADP-ribosyltransferase PARP6, found in Mus musculus (Mouse).